The chain runs to 513 residues: Cytochrome P450 monooxygenase sthF (513 aa).

The next 2 membrane-spanning stretches (helical) occupy residues 13-33 (FPSLHRIIISTFALIAAYIFI) and 212-232 (MLHPWLQLVFANIYITHIILL). Cys452 contacts heme.

Belongs to the cytochrome P450 family. Heme is required as a cofactor.

The protein localises to the membrane. It catalyses the reaction dehydroprobetaenone I + NADPH + O2 + H(+) = epoxybetaenone + NADP(+) + H2O. The catalysed reaction is dehydroprobetaenone I + 3 NADPH + 3 O2 + 3 H(+) = betaenone C + 3 NADP(+) + 3 H2O. The enzyme catalyses probetaenone I + 3 NADPH + 3 O2 + 3 H(+) = betaenone B + 3 NADP(+) + 3 H2O. It participates in mycotoxin biosynthesis. Functionally, cytochrome P450 monooxygenase; part of the gene cluster that mediates the biosynthesis of the phytotoxin stemphyloxin II. The first step of the pathway is the synthesis of dehydroprobetaenone I by the polyketide synthase sthA and the enoyl reductase sthE via condensation of one acetyl-CoA starter unit with 7 malonyl-CoA units and 5 methylations. The C-terminal reductase (R) domain of sthA catalyzes the reductive release of the polyketide chain. Because sthA lacks a designated enoylreductase (ER) domain, the required activity is provided the enoyl reductase sthE. The short-chain dehydrogenase/reductase sthC then catalyzes reduction of dehydroprobetaenone I to probetaenone I. The cytochrome P450 monooxygenase sthF catalyzes successive epoxidation, oxidation (resulting from epoxide opening) and hydroxylation to install a tertiary alcohol in the decaline ring to yield betaenone C from dehydroprobetaenone I and betaenone B from probetaenone I. The FAD-linked oxidoreductase sthB is responsible for the conversion of betaenone C to betaenone A via an intramolecular aldol reaction between C-1 and C-17 to form the bridged tricyclic system in betaenone A. Finally, the cytochrome P450 monooxygenase sthD catalyzes the hydroxylation of C-15 to afford the final metabolite stemphyloxin II. This chain is Cytochrome P450 monooxygenase sthF, found in Phaeosphaeria nodorum (strain SN15 / ATCC MYA-4574 / FGSC 10173) (Glume blotch fungus).